We begin with the raw amino-acid sequence, 244 residues long: Adenosylcobinamide-GDP ribazoletransferase (244 aa).

The next 5 membrane-spanning stretches (helical) occupy residues 31 to 51, 55 to 75, 109 to 129, 134 to 154, and 188 to 208; these read LLFY…ASHL, APAP…SGAL, IAVV…WVLV, GGWL…LFMG, and VVLG…VFLW.

It belongs to the CobS family. Mg(2+) is required as a cofactor.

The protein localises to the cell inner membrane. It catalyses the reaction alpha-ribazole + adenosylcob(III)inamide-GDP = adenosylcob(III)alamin + GMP + H(+). The catalysed reaction is alpha-ribazole 5'-phosphate + adenosylcob(III)inamide-GDP = adenosylcob(III)alamin 5'-phosphate + GMP + H(+). Its pathway is cofactor biosynthesis; adenosylcobalamin biosynthesis; adenosylcobalamin from cob(II)yrinate a,c-diamide: step 7/7. Functionally, joins adenosylcobinamide-GDP and alpha-ribazole to generate adenosylcobalamin (Ado-cobalamin). Also synthesizes adenosylcobalamin 5'-phosphate from adenosylcobinamide-GDP and alpha-ribazole 5'-phosphate. The chain is Adenosylcobinamide-GDP ribazoletransferase from Pseudomonas entomophila (strain L48).